The chain runs to 460 residues: Acetyl-coenzyme A carboxylase carboxyl transferase subunit beta, chloroplastic (460 aa).

A CoA carboxyltransferase N-terminal domain is found at 179–460 (LWVQCESCYG…GFFPLTQNGN (282 aa)). Positions 183, 186, 202, and 205 each coordinate Zn(2+). The C4-type zinc finger occupies 183-205 (CESCYGLNYKKFFKSKMNICEHC).

This sequence belongs to the AccD/PCCB family. In terms of assembly, acetyl-CoA carboxylase is a heterohexamer composed of biotin carboxyl carrier protein, biotin carboxylase and 2 subunits each of ACCase subunit alpha and ACCase plastid-coded subunit beta (accD). Zn(2+) is required as a cofactor.

The protein resides in the plastid. It is found in the chloroplast stroma. It carries out the reaction N(6)-carboxybiotinyl-L-lysyl-[protein] + acetyl-CoA = N(6)-biotinyl-L-lysyl-[protein] + malonyl-CoA. It functions in the pathway lipid metabolism; malonyl-CoA biosynthesis; malonyl-CoA from acetyl-CoA: step 1/1. In terms of biological role, component of the acetyl coenzyme A carboxylase (ACC) complex. Biotin carboxylase (BC) catalyzes the carboxylation of biotin on its carrier protein (BCCP) and then the CO(2) group is transferred by the transcarboxylase to acetyl-CoA to form malonyl-CoA. The polypeptide is Acetyl-coenzyme A carboxylase carboxyl transferase subunit beta, chloroplastic (Cicer arietinum (Chickpea)).